Reading from the N-terminus, the 315-residue chain is MHCIRPIKAGFNATGDIVYSSKKISKELASFAFPCRKCIPCRLNMAREKAIRAYHESQMWDDNIFLTLTYDDEHLKSDRLQWIDFDLFIKRLNEKLNRGLSKENRRPLPYMVTGEYGDKTKRPHWHVLIFNFRPDDAKKHYVTELGEQVYTSEFIRDLWTHGNIEFGSVTLDSASYVARYAAKKLAHGNDQDHDYHPIHNTSKKHAIGKKWIEKYHEQTFSRGYVVLPNGSQGPIPRYYQDWYKKNHPEKWMEYDAKVKLKSKELAEMQSRKDQLDDFANFINYRGGTNYPLSRTQVKLAILKSKFKQLQEKLKL.

Catalysis depends on O-(5'-phospho-DNA)-tyrosine intermediate residues Tyr176 and Tyr180. Residues 253–315 (EYDAKVKLKS…FKQLQEKLKL (63 aa)) are a coiled coil.

The protein belongs to the microviridae Rep protein family.

It catalyses the reaction ATP + (deoxyribonucleotide)n-3'-hydroxyl + 5'-phospho-(deoxyribonucleotide)m = (deoxyribonucleotide)n+m + AMP + diphosphate.. In terms of biological role, plays an essential role in viral DNA replication. Binds the origin of replication and cleaves the dsDNA replicative form I (RFI) and becomes covalently bound to it via phosphotyrosine bond, generating the dsDNA replicative form II (RFII). In turn, viral DNA replication initiates at the 3'-OH of the cleavage site. After one round of rolling circle synthesis, protein VP4 is linked to the newly synthesized ssDNA and joins the ends of the displaced strand to generate a circular single-stranded molecule ready to be packed into a virion. The sequence is that of Replication-associated protein VP4 from Bdellovibrio bacteriovorus (Bacteriophage phiMH2K).